The following is a 131-amino-acid chain: Profilin-6 (131 aa).

Belongs to the profilin family. As to quaternary structure, occurs in many kinds of cells as a complex with monomeric actin in a 1:1 ratio.

It is found in the cytoplasm. The protein localises to the cytoskeleton. In terms of biological role, binds to actin and affects the structure of the cytoskeleton. At high concentrations, profilin prevents the polymerization of actin, whereas it enhances it at low concentrations. By binding to PIP2, it inhibits the formation of IP3 and DG. The chain is Profilin-6 from Hevea brasiliensis (Para rubber tree).